We begin with the raw amino-acid sequence, 392 residues long: Methylthioribose kinase (392 aa).

ATP contacts are provided by residues Asn-38, Lys-53, and 107-109 (EDL). Asp-225 contacts substrate. Position 242–244 (242–244 (DPE)) interacts with ATP. Residue Arg-332 participates in substrate binding.

It belongs to the methylthioribose kinase family. In terms of assembly, homodimer.

The enzyme catalyses 5-(methylsulfanyl)-D-ribose + ATP = 5-(methylsulfanyl)-alpha-D-ribose 1-phosphate + ADP + H(+). Its pathway is amino-acid biosynthesis; L-methionine biosynthesis via salvage pathway; S-methyl-5-thio-alpha-D-ribose 1-phosphate from S-methyl-5'-thioadenosine (hydrolase route): step 2/2. Functionally, catalyzes the phosphorylation of methylthioribose into methylthioribose-1-phosphate. This is Methylthioribose kinase from Bacillus mycoides (strain KBAB4) (Bacillus weihenstephanensis).